The sequence spans 226 residues: Phosphoglycolate phosphatase (226 aa).

Asp9 acts as the Nucleophile in catalysis. Asp9 and Asp11 together coordinate Mg(2+). Lys150 serves as a coordination point for substrate. The Mg(2+) site is built by Asp173 and Asp177.

This sequence belongs to the archaeal SPP-like hydrolase family. Requires Mg(2+) as cofactor.

The enzyme catalyses 2-phosphoglycolate + H2O = glycolate + phosphate. Its function is as follows. Catalyzes the dephosphorylation of 2-phosphoglycolate. This Methanococcoides burtonii (strain DSM 6242 / NBRC 107633 / OCM 468 / ACE-M) protein is Phosphoglycolate phosphatase.